A 1073-amino-acid chain; its full sequence is Activated Cdc42 kinase Ack (1073 aa).

Residues 88 to 110 (IGGGKQPSSKKQSSAARESSQGN) are disordered. A Protein kinase domain is found at 123–383 (ITMGLKLGDG…PTFAALKEYL (261 aa)). ATP-binding positions include 129–137 (LGDGSFGVV) and K156. Catalysis depends on D250, which acts as the Proton acceptor. The 61-residue stretch at 386–446 (MSPPVMRASR…PRNLLEQRKV (61 aa)) folds into the SH3 domain. Disordered stretches follow at residues 484–506 (QRKCASMTNQPHAKERKSTSSKQ), 803–834 (PLKNGAAPGSVHSNHSSPSSTASPKQNNVEAA), and 862–882 (AQPPTEQAEEQIYQNHRHQQQ). Low complexity predominate over residues 812-826 (SVHSNHSSPSSTASP). The UBA domain occupies 1029 to 1072 (GLATRHYKIDQLARLGVAGRPQCEQALQQTNWSLEVAAELLLNA).

This sequence belongs to the protein kinase superfamily. Tyr protein kinase family. In terms of assembly, interacts with yki and ex. Interacts with drk. Likely to be a member of an axonal guidance receptor complex that includes SH3PX1, dock and Dscam. Interacts (via N-terminus) with dock. Interacts with SH3PX1 (via SH3 domain). Mg(2+) serves as cofactor. Phosphorylated. Autophosphorylated. Detected in ovaries (at protein level). In adults, relatively higher expression in the head compared to the body.

It is found in the cytoplasm. The protein resides in the cytoplasmic vesicle. Its subcellular location is the clathrin-coated vesicle. The enzyme catalyses L-tyrosyl-[protein] + ATP = O-phospho-L-tyrosyl-[protein] + ADP + H(+). It carries out the reaction L-threonyl-[protein] + ATP = O-phospho-L-threonyl-[protein] + ADP + H(+). Functionally, non-receptor tyrosine-protein and serine/threonine-protein kinase that is implicated in diverse biological functions such as cell survival, cell differentiation, cell growth and proliferation. Phosphorylates SH3PX1 and ex. Phosphorylates SH3PX1 predominantly on 'Tyr-56', which likely promotes the recruitment of SH3PX1 to an axonal guidance receptor complex that includes dock and Dscam; because phosphorylation of SH3PX1 increases its interaction with the complex member dock while decreasing its interaction with the actin cytoskeleton modulator WASp. In the wing and eye, promotes tissue growth, and during embryogenesis coordinates cell shape changes required for correct dorsal closure. Functions in the negative regulation of the Hippo/SWH (Sav/Wts/Hpo) signaling pathway by enhancing yki activity thereby promoting cell proliferation and inhibiting apoptosis. This is accomplished, at least in part, by phosphorylating ex thereby reducing its ability to efficiently activate the Hippo signaling cascade. In the eye disk, wing disk and possibly spermatids, inhibits programmed cell death induced by hid and rpr through a mechanism that is independent of the MAP kinase signal transduction pathway. Essential for male and female fertility. During oogenesis required for the correct temporal assembly, and consequently the catalytic activity of long Ctps filaments (cytoophidium) in the germline nurse cells, likely by phosphorylating an unidentified substrate that is essential for linking individual Ctps filaments into large, catalytically active assemblies. This chain is Activated Cdc42 kinase Ack, found in Drosophila melanogaster (Fruit fly).